The following is a 156-amino-acid chain: Small ribosomal subunit protein uS7 (156 aa).

This sequence belongs to the universal ribosomal protein uS7 family. As to quaternary structure, part of the 30S ribosomal subunit. Contacts proteins S9 and S11.

Functionally, one of the primary rRNA binding proteins, it binds directly to 16S rRNA where it nucleates assembly of the head domain of the 30S subunit. Is located at the subunit interface close to the decoding center, probably blocks exit of the E-site tRNA. The polypeptide is Small ribosomal subunit protein uS7 (Burkholderia multivorans (strain ATCC 17616 / 249)).